A 220-amino-acid polypeptide reads, in one-letter code: Glutathione S-transferase U26 (220 aa).

In terms of domain architecture, GST N-terminal spans 4 to 83; the sequence is DQVILLDYWP…YIDEVWSDAS (80 aa). Residues 14–15, 40–41, 54–55, and 67–68 contribute to the glutathione site; these read SM, VK, KI, and ES. Residues 89-210 enclose the GST C-terminal domain; that stretch reads DPYQKSRARF…ADSDRIIEYV (122 aa).

It belongs to the GST superfamily. Tau family.

It is found in the cytoplasm. The protein localises to the cytosol. The enzyme catalyses RX + glutathione = an S-substituted glutathione + a halide anion + H(+). In terms of biological role, in vitro, possesses glutathione S-transferase activity toward 1-chloro-2,4-dinitrobenzene (CDNB). May be involved in the conjugation of reduced glutathione to a wide number of exogenous and endogenous hydrophobic electrophiles and have a detoxification role against certain herbicides. The chain is Glutathione S-transferase U26 (GSTU26) from Arabidopsis thaliana (Mouse-ear cress).